Consider the following 509-residue polypeptide: MKLAYWMYAGPAHIGTLRVASSFKNVHAIMHAPLGDDYFNVMRSMLERERDFTPVTASIVDRHVLARGSQNKVVDNITRKDKEERPDLIVLTPTCTSSILQEDLQNFVNRASMNSNSDVILADVNHYRVNELQAADRTLEQVVRFYIEKAKNNNDLDLIKTTKPSANIIGIFTLGFHNQHDCRELKRLLQDLGIQINEVIPEGGSVSNLKKLPKAWFNLVPYREVGLMTAIYLEKEFKMPYVSTTPMGVVDTGSCIKEIENIINSYTQDKISYDEYIDKQTRFVSQAAWFSRSIDCQNLTGKKAVVFGDATHAASMTRILSKEMGIYVICAGTYCTHDADWFKEQVQGYCDEVLITDNHTEVGDLIARVEPAAIFGTQMERHIGKRLNIPCGVISAPVHIQNFPLGYRPFLGYEGTNQIADLVYNSFTLGMEDHLLEIFGGHDTKEVITKGLSTDSELRWTSESENELRKIPGFVRGKIKRNTEKFARQNNVTEITVEIMYAAKEAMNA.

Asp36 lines the [4Fe-4S] cluster pocket. The active-site Proton donor is the Asp295. Residue 430–431 (GM) participates in substrate binding.

Belongs to the ChlB/BchB/BchZ family. Protochlorophyllide reductase is composed of three subunits; ChlL, ChlN and ChlB. Forms a heterotetramer of two ChlB and two ChlN subunits. It depends on [4Fe-4S] cluster as a cofactor.

It localises to the plastid. The protein localises to the chloroplast. The enzyme catalyses chlorophyllide a + oxidized 2[4Fe-4S]-[ferredoxin] + 2 ADP + 2 phosphate = protochlorophyllide a + reduced 2[4Fe-4S]-[ferredoxin] + 2 ATP + 2 H2O. Its pathway is porphyrin-containing compound metabolism; chlorophyll biosynthesis (light-independent). Component of the dark-operative protochlorophyllide reductase (DPOR) that uses Mg-ATP and reduced ferredoxin to reduce ring D of protochlorophyllide (Pchlide) to form chlorophyllide a (Chlide). This reaction is light-independent. The NB-protein (ChlN-ChlB) is the catalytic component of the complex. This chain is Light-independent protochlorophyllide reductase subunit B, found in Mesostigma viride (Green alga).